We begin with the raw amino-acid sequence, 160 residues long: MEKDDLTHFNDEKRAKMVDVTSKSETKRRAIARATIHMNEETLARIHAGKIAKGDVLAVAQVAGIMAAKKTSELIPMCHPIMTTKADISFEDDGNTALTITSEVVTVGKTGVEMEALTAVTIAALTIYDMCKAMDKGMRIEKTYLVEKTGGKSGTFKAEA.

Substrate contacts are provided by residues 77-79 (MCH) and 114-115 (ME). The active site involves Asp129.

This sequence belongs to the MoaC family. In terms of assembly, homohexamer; trimer of dimers.

The catalysed reaction is (8S)-3',8-cyclo-7,8-dihydroguanosine 5'-triphosphate = cyclic pyranopterin phosphate + diphosphate. The protein operates within cofactor biosynthesis; molybdopterin biosynthesis. Its function is as follows. Catalyzes the conversion of (8S)-3',8-cyclo-7,8-dihydroguanosine 5'-triphosphate to cyclic pyranopterin monophosphate (cPMP). This chain is Cyclic pyranopterin monophosphate synthase, found in Listeria welshimeri serovar 6b (strain ATCC 35897 / DSM 20650 / CCUG 15529 / CIP 8149 / NCTC 11857 / SLCC 5334 / V8).